Reading from the N-terminus, the 344-residue chain is AI-2 transport protein TqsA (344 aa).

The Cytoplasmic segment spans residues Met1–Pro4. Residues Ile5–Cys25 traverse the membrane as a helical segment. Residues Gly26–Ala30 are Periplasmic-facing. The chain crosses the membrane as a helical span at residues Ala31 to Val51. At Gln52–Arg61 the chain is on the cytoplasmic side. Residues Val62–Tyr82 form a helical membrane-spanning segment. The Periplasmic segment spans residues Leu83 to Ser149. A helical transmembrane segment spans residues Ser150 to Gly170. Residues Lys171–Tyr196 are Cytoplasmic-facing. The helical transmembrane segment at Leu197 to Ala217 threads the bilayer. Topologically, residues Leu218–Arg221 are periplasmic. The chain crosses the membrane as a helical span at residues Phe222 to Val242. Over Leu243 to Gly257 the chain is Cytoplasmic. A helical membrane pass occupies residues Phe258–Ile278. At Leu279 to Thr292 the chain is on the periplasmic side. The chain crosses the membrane as a helical span at residues Leu293–Leu313. Topologically, residues Ser314 to Glu344 are cytoplasmic.

This sequence belongs to the autoinducer-2 exporter (AI-2E) (TC 2.A.86) family.

It localises to the cell inner membrane. It carries out the reaction (2R,4S)-2-methyltetrahydrofuran-2,3,3,4-tetrol(in) = (2R,4S)-2-methyltetrahydrofuran-2,3,3,4-tetrol(out). In terms of biological role, involved in the transport of the quorum-sensing signal autoinducer 2 (AI-2). Controls the transport of AI-2 either by enhancing its secretion or inhibiting its uptake and consequently represses biofilm formation and motility and affects the global gene expression in biofilms. The protein is AI-2 transport protein TqsA of Escherichia coli (strain K12).